A 411-amino-acid chain; its full sequence is MSKRQLCILGSTGSIGCSTLDVVRLHPERFQVISLAAYTSVDVIFEQCIEFKPQQVVLVSSEHAALLTQKLNDANVSNITVLSGEQALIDIAECQNSDTVMASIVGASGLLPTLAAVNAGKRVLLANKEALVTSGAIFMAAVKASGAELLPIDSEHNAIFQCLPSQQQAEIGECQLLANGISKILLTGSGGPFRTRAIDTLESVTPSQACAHPNWDMGRKISVDSATMMNKGLEFIEAKWLFNVEAEDIQVVLHPQSTIHSMVQYKDGSVIAQMGNPDMRTPIAHALSFPERIESGVAPLDFFNTPSFEFQPVDFERYPNLELAIEACKQGQAACTALNAANEIAVAAFLDEKIKFTDIYKINETSVKKFVSQKVDNINEVIALDEQARSFAQTLLADFLQTEALSQKGNK.

Residues Thr12, Gly13, Ser14, Ile15, and Asn127 each contribute to the NADPH site. Lys128 contributes to the 1-deoxy-D-xylulose 5-phosphate binding site. An NADPH-binding site is contributed by Glu129. Asp153 provides a ligand contact to Mn(2+). 1-deoxy-D-xylulose 5-phosphate contacts are provided by Ser154, Glu155, Ser189, and His212. Residue Glu155 participates in Mn(2+) binding. Gly218 contributes to the NADPH binding site. 1-deoxy-D-xylulose 5-phosphate is bound by residues Ser225, Asn230, Lys231, and Glu234. Mn(2+) is bound at residue Glu234.

The protein belongs to the DXR family. It depends on Mg(2+) as a cofactor. The cofactor is Mn(2+).

It catalyses the reaction 2-C-methyl-D-erythritol 4-phosphate + NADP(+) = 1-deoxy-D-xylulose 5-phosphate + NADPH + H(+). The protein operates within isoprenoid biosynthesis; isopentenyl diphosphate biosynthesis via DXP pathway; isopentenyl diphosphate from 1-deoxy-D-xylulose 5-phosphate: step 1/6. Functionally, catalyzes the NADPH-dependent rearrangement and reduction of 1-deoxy-D-xylulose-5-phosphate (DXP) to 2-C-methyl-D-erythritol 4-phosphate (MEP). The sequence is that of 1-deoxy-D-xylulose 5-phosphate reductoisomerase from Colwellia psychrerythraea (strain 34H / ATCC BAA-681) (Vibrio psychroerythus).